The following is a 148-amino-acid chain: Putative carbonic anhydrase (148 aa).

The region spanning 1–146 (CLKRLQPGEM…LNGRTVFEVH (146 aa)) is the Alpha-carbonic anhydrase domain.

The protein belongs to the alpha-carbonic anhydrase family. Zn(2+) serves as cofactor. Component of the acid-insoluble organic matrix of the aragonitic skeleton (at protein level).

It localises to the secreted. The enzyme catalyses hydrogencarbonate + H(+) = CO2 + H2O. In terms of biological role, reversible hydration of carbon dioxide. This chain is Putative carbonic anhydrase, found in Acropora millepora (Staghorn coral).